The following is a 494-amino-acid chain: Probable cytosol aminopeptidase (494 aa).

Lys-260 and Asp-265 together coordinate Mn(2+). Lys-272 is a catalytic residue. Mn(2+) is bound by residues Asp-283, Asp-342, and Glu-344. Residue Arg-346 is part of the active site.

This sequence belongs to the peptidase M17 family. The cofactor is Mn(2+).

The protein localises to the cytoplasm. It catalyses the reaction Release of an N-terminal amino acid, Xaa-|-Yaa-, in which Xaa is preferably Leu, but may be other amino acids including Pro although not Arg or Lys, and Yaa may be Pro. Amino acid amides and methyl esters are also readily hydrolyzed, but rates on arylamides are exceedingly low.. The enzyme catalyses Release of an N-terminal amino acid, preferentially leucine, but not glutamic or aspartic acids.. Presumably involved in the processing and regular turnover of intracellular proteins. Catalyzes the removal of unsubstituted N-terminal amino acids from various peptides. The polypeptide is Probable cytosol aminopeptidase (Bacillus thuringiensis subsp. konkukian (strain 97-27)).